The chain runs to 643 residues: Arginine--tRNA ligase, mitochondrial (643 aa).

A 'HIGH' region motif is present at residues 188–198 (PNIAKPFHAGH).

Belongs to the class-I aminoacyl-tRNA synthetase family.

It localises to the mitochondrion matrix. It carries out the reaction tRNA(Arg) + L-arginine + ATP = L-arginyl-tRNA(Arg) + AMP + diphosphate. This is Arginine--tRNA ligase, mitochondrial (MSR1) from Saccharomyces cerevisiae (strain ATCC 204508 / S288c) (Baker's yeast).